Reading from the N-terminus, the 573-residue chain is Multidrug and toxin extrusion protein 2 (573 aa).

The Cytoplasmic segment spans residues 1-46 (MEPAEDSLGATIQPPELVRVPRGRSLRILLGLRGALSPDVRREAAA). Residues 47–67 (LVALAGPVFLAQLMIFLISIV) traverse the membrane as a helical segment. Residues 68–81 (SSIFCGHLGKVELD) are Extracellular-facing. Residues 82 to 102 (AVTLAVSVVNVTGISVGTGLA) form a helical membrane-spanning segment. At 103 to 122 (SACDTLMSQSFGGKNLKRVG) the chain is on the cytoplasmic side. The chain crosses the membrane as a helical span at residues 123 to 143 (VILQRGILILLLCCFPCWAIF). At 144–161 (LNTERLLLLLRQDPDVAR) the chain is on the extracellular side. A helical membrane pass occupies residues 162 to 182 (LAQVYVMICIPALPAAFLFQL). The Cytoplasmic segment spans residues 183–196 (QTRYLQSQGIIMPQ). The helical transmembrane segment at 197 to 217 (VIVGIAANVVNVGMNAFLLYA) threads the bilayer. Over 218–225 (LDLGVVGS) the chain is Extracellular. The chain crosses the membrane as a helical span at residues 226-246 (AWANTTSQFFLSALLFLYVWW). At 247-266 (KRIHIHTWGGWTRECFQEWS) the chain is on the cytoplasmic side. The chain crosses the membrane as a helical span at residues 267–286 (SYTRLAIPSMFMVCIEWWTF). Residues 287–304 (EIGTFLAGLVNVTELGAQ) lie on the Extracellular side of the membrane. A helical membrane pass occupies residues 305–325 (AVIYELASVAYMVPFGFGVAA). Residues 326–345 (SVRVGNALGAGNADQARCSC) are Cytoplasmic-facing. A helical transmembrane segment spans residues 346 to 366 (TTVLLCAGVCALLVGILLAAL). Residues 367 to 379 (KDVVAYIFTNDKD) are Extracellular-facing. Residues 380 to 400 (IISLVSQVMPIFAPFHLFDAL) form a helical membrane-spanning segment. Residues 401–415 (AGTCGGVLRGTGKQK) are Cytoplasmic-facing. The chain crosses the membrane as a helical span at residues 416 to 436 (IGAVLNTIGYYGFGFPIGVSL). Over 437 to 443 (MFAAKLG) the chain is Extracellular. Residues 444-464 (IIGLWAGLIVCVSFQAFSYLI) traverse the membrane as a helical segment. Residues 465-545 (YILRTNWSRV…VGEVLTGRQL (81 aa)) lie on the Cytoplasmic side of the membrane. A helical membrane pass occupies residues 546–566 (VFYRGMALTVSVAVLIAGIVV). Over 567-573 (RVFNDRG) the chain is Extracellular.

The protein belongs to the multi antimicrobial extrusion (MATE) (TC 2.A.66.1) family. As to expression, expressed in testis; especially in testicular Leydig cells.

The protein localises to the cell membrane. Multidrug efflux pump that functions as a H(+)/organic cation antiporter. May mediate testosterone efflux from the Leydig cells in the testes. This chain is Multidrug and toxin extrusion protein 2 (Slc47a2), found in Mus musculus (Mouse).